We begin with the raw amino-acid sequence, 700 residues long: Glycine--tRNA ligase beta subunit (700 aa).

Belongs to the class-II aminoacyl-tRNA synthetase family. As to quaternary structure, tetramer of two alpha and two beta subunits.

The protein resides in the cytoplasm. It catalyses the reaction tRNA(Gly) + glycine + ATP = glycyl-tRNA(Gly) + AMP + diphosphate. The sequence is that of Glycine--tRNA ligase beta subunit from Helicobacter pylori (strain Shi470).